A 148-amino-acid polypeptide reads, in one-letter code: Putative pre-16S rRNA nuclease (148 aa).

This sequence belongs to the YqgF nuclease family.

The protein resides in the cytoplasm. Could be a nuclease involved in processing of the 5'-end of pre-16S rRNA. The polypeptide is Putative pre-16S rRNA nuclease (Chlamydia trachomatis serovar L2 (strain ATCC VR-902B / DSM 19102 / 434/Bu)).